The primary structure comprises 146 residues: Ribonuclease H (146 aa).

The RNase H type-1 domain maps to 4 to 145 (ELNKVVIYTD…ADMLARSQIV (142 aa)). Residues aspartate 13, glutamate 51, aspartate 73, and aspartate 137 each coordinate Mg(2+).

The protein belongs to the RNase H family. Monomer. Mg(2+) serves as cofactor.

It is found in the cytoplasm. The enzyme catalyses Endonucleolytic cleavage to 5'-phosphomonoester.. Functionally, endonuclease that specifically degrades the RNA of RNA-DNA hybrids. The polypeptide is Ribonuclease H (Ehrlichia chaffeensis (strain ATCC CRL-10679 / Arkansas)).